The sequence spans 952 residues: UvrABC system protein A (952 aa).

Residue 38–45 (GLSGSGKS) participates in ATP binding. A C4-type zinc finger spans residues 258 to 285 (CNECGFSIPELEPRFFSFNSPVGACKSC). ABC transporter domains follow at residues 315 to 596 (FRSV…KKSI) and 616 to 945 (GNGK…LFLE). 648 to 655 (GVSGSGKS) contributes to the ATP binding site. A C4-type zinc finger spans residues 747 to 773 (CENCSGDGLIKIEMHFLPDVFVKCESC).

It belongs to the ABC transporter superfamily. UvrA family. In terms of assembly, forms a heterotetramer with UvrB during the search for lesions.

Its subcellular location is the cytoplasm. Functionally, the UvrABC repair system catalyzes the recognition and processing of DNA lesions. UvrA is an ATPase and a DNA-binding protein. A damage recognition complex composed of 2 UvrA and 2 UvrB subunits scans DNA for abnormalities. When the presence of a lesion has been verified by UvrB, the UvrA molecules dissociate. The protein is UvrABC system protein A of Malacoplasma penetrans (strain HF-2) (Mycoplasma penetrans).